Reading from the N-terminus, the 870-residue chain is MEIGVSVAECKSVPGITSTPHSKDHSSPFYSPSHNGLLTDHHESLDNDVAREIQYLDEVLEANCCDSSVDGTYNGISSPEPGAAILVSSLGSPAHSATKVEPIEKASGRQLPPHIELSRSPSDSMAEGERANGHSTDQPQDMLGNSLQAPASPSSSTSSHCSSRDGEFTLTTLKKEAKFELRAFHEDKKPSKLFEEDEHEKEQFCIRKVRPSEEMIELEKERRELIRSQAVKKNPGIAAKWWNPPQKKTIEEQLDEEHLESHRKYKERKEKRAQQEQLQLQQQQQQQLQQLQQLQQQQQQQLSTSQLCTAPAAHEHLDSIEHTKEDVVTEQIDFSAARKQFQQMENSRQTLAKGQSTPRLFSIKPFYKPLGSINSDKPPTILRPATIGGTVEDSSTQAAKEQKALCVSESQSAGAGTGNAATQGKEGPYSEPSKRGPLSKLWAEDGEFTSARAVLTVVKDEDHGILDQFSRSVNVSLTQEELDSGLDELSVRSQDTTVLETLSNDFSMDNISDSGASNETPNALQENSLADFSLPQTPQTDNPSEGREGVSKSFSDHGFYSPSSTLGDSPSVDDPLEYQAGLLVQNAIQQAIAEQVDKAEVHTSKEGSEQQEPGAMVEEAGSQAPGSEKPQGMFAPPQVSSPVQEKRDVLPKILPGEDKTLREKGPSQPPTAVQPSGPVNMKETRPEGGYFSKYSEAAELRSTASLLATQESDVMVGPFKLRSRKQRTLSMIEEEIRAAQEREEELKRQRQVRQSTPSPRAQNAPSLPSRTTCYKTAPGKIEKVKPPPSPTTEGPSLQPDLAPEEAAGAQRPKNLMQTLMEDYETHKSKRRERMDDSSVLEATRVNRRKSALALRWEAGIYANQEEEDNE.

2 disordered regions span residues 14-43 and 103-165; these read PGITSTPHSKDHSSPFYSPSHNGLLTDHHE and IEKA…SSRD. Residue S122 is modified to Phosphoserine. The segment covering 133 to 151 has biased composition (polar residues); it reads GHSTDQPQDMLGNSLQAPA. A Phosphoserine modification is found at S152. The segment covering 152–161 has biased composition (low complexity); it reads SPSSSTSSHC. K174 participates in a covalent cross-link: Glycyl lysine isopeptide (Lys-Gly) (interchain with G-Cter in SUMO1); alternate. K174 participates in a covalent cross-link: Glycyl lysine isopeptide (Lys-Gly) (interchain with G-Cter in SUMO2); alternate. Residues 213–307 are a coiled coil; sequence EEMIELEKER…QQQQLSTSQL (95 aa). A disordered region spans residues 233 to 324; it reads KNPGIAAKWW…EHLDSIEHTK (92 aa). Residues 259–274 are compositionally biased toward basic and acidic residues; sequence LESHRKYKERKEKRAQ. Over residues 275-302 the composition is skewed to low complexity; that stretch reads QEQLQLQQQQQQQLQQLQQLQQQQQQQL. The span at 313–324 shows a compositional bias: basic and acidic residues; that stretch reads AHEHLDSIEHTK. Phosphoserine is present on S347. Residues 409-436 form a disordered region; it reads ESQSAGAGTGNAATQGKEGPYSEPSKRG. Over residues 410 to 424 the composition is skewed to low complexity; that stretch reads SQSAGAGTGNAATQG. Phosphoserine occurs at positions 472, 476, and 528. A compositionally biased stretch (polar residues) spans 506–543; that stretch reads FSMDNISDSGASNETPNALQENSLADFSLPQTPQTDNP. Disordered regions lie at residues 506–577 and 595–688; these read FSMD…DPLE and QVDK…RPEG. T537 carries the phosphothreonine modification. The segment at 576-589 is PKA-RII subunit binding domain; the sequence is LEYQAGLLVQNAIQ. A compositionally biased stretch (basic and acidic residues) spans 595-608; sequence QVDKAEVHTSKEGS. S641 carries the post-translational modification Phosphoserine. Over residues 644-665 the composition is skewed to basic and acidic residues; sequence QEKRDVLPKILPGEDKTLREKG. The stretch at 720 to 755 forms a coiled coil; it reads KLRSRKQRTLSMIEEEIRAAQEREEELKRQRQVRQS. Phosphoserine occurs at positions 730, 758, 789, and 796. Positions 740–814 are disordered; the sequence is QEREEELKRQ…EAAGAQRPKN (75 aa). Positions 755–774 are enriched in polar residues; sequence STPSPRAQNAPSLPSRTTCY.

It localises to the apical cell membrane. In terms of biological role, binds to regulatory subunit (RII) of protein kinase A. May be involved in establishing polarity in signaling systems or in integrating PKA-RII isoforms with downstream effectors to capture, amplify and focus diffuse, trans-cellular signals carried by cAMP. Binds to and modulates the structure of the actin cytoskeleton. The sequence is that of A-kinase anchor protein 2 from Rattus norvegicus (Rat).